We begin with the raw amino-acid sequence, 331 residues long: Ribonuclease Z (331 aa).

Zn(2+) is bound by residues H56, H58, D60, H61, H162, D235, and H297. D60 (proton acceptor) is an active-site residue.

The protein belongs to the RNase Z family. As to quaternary structure, homodimer. Zn(2+) is required as a cofactor.

The catalysed reaction is Endonucleolytic cleavage of RNA, removing extra 3' nucleotides from tRNA precursor, generating 3' termini of tRNAs. A 3'-hydroxy group is left at the tRNA terminus and a 5'-phosphoryl group is left at the trailer molecule.. Functionally, zinc phosphodiesterase, which displays some tRNA 3'-processing endonuclease activity. Probably involved in tRNA maturation, by removing a 3'-trailer from precursor tRNA. This chain is Ribonuclease Z (rnz), found in Deinococcus radiodurans (strain ATCC 13939 / DSM 20539 / JCM 16871 / CCUG 27074 / LMG 4051 / NBRC 15346 / NCIMB 9279 / VKM B-1422 / R1).